The following is a 631-amino-acid chain: 1-deoxy-D-xylulose-5-phosphate synthase (631 aa).

Thiamine diphosphate-binding positions include H74 and 115–117; that span reads GHS. A Mg(2+)-binding site is contributed by D146. Thiamine diphosphate is bound by residues 147–148, N175, Y286, and E368; that span reads GA. N175 contributes to the Mg(2+) binding site.

This sequence belongs to the transketolase family. DXPS subfamily. Homodimer. It depends on Mg(2+) as a cofactor. Thiamine diphosphate is required as a cofactor.

It carries out the reaction D-glyceraldehyde 3-phosphate + pyruvate + H(+) = 1-deoxy-D-xylulose 5-phosphate + CO2. It functions in the pathway metabolic intermediate biosynthesis; 1-deoxy-D-xylulose 5-phosphate biosynthesis; 1-deoxy-D-xylulose 5-phosphate from D-glyceraldehyde 3-phosphate and pyruvate: step 1/1. In terms of biological role, catalyzes the acyloin condensation reaction between C atoms 2 and 3 of pyruvate and glyceraldehyde 3-phosphate to yield 1-deoxy-D-xylulose-5-phosphate (DXP). The sequence is that of 1-deoxy-D-xylulose-5-phosphate synthase from Natranaerobius thermophilus (strain ATCC BAA-1301 / DSM 18059 / JW/NM-WN-LF).